The sequence spans 121 residues: Ribosome-binding factor A (121 aa).

It belongs to the RbfA family. Monomer. Binds 30S ribosomal subunits, but not 50S ribosomal subunits or 70S ribosomes.

It is found in the cytoplasm. Its function is as follows. One of several proteins that assist in the late maturation steps of the functional core of the 30S ribosomal subunit. Associates with free 30S ribosomal subunits (but not with 30S subunits that are part of 70S ribosomes or polysomes). Required for efficient processing of 16S rRNA. May interact with the 5'-terminal helix region of 16S rRNA. The protein is Ribosome-binding factor A of Oenococcus oeni (strain ATCC BAA-331 / PSU-1).